We begin with the raw amino-acid sequence, 612 residues long: Dihydroxy-acid dehydratase (612 aa).

Mg(2+) is bound at residue D81. [2Fe-2S] cluster is bound at residue C122. D123 and K124 together coordinate Mg(2+). K124 is modified (N6-carboxylysine). A [2Fe-2S] cluster-binding site is contributed by C193. E489 serves as a coordination point for Mg(2+). S515 serves as the catalytic Proton acceptor.

Belongs to the IlvD/Edd family. Homodimer. It depends on [2Fe-2S] cluster as a cofactor. Mg(2+) is required as a cofactor.

The catalysed reaction is (2R)-2,3-dihydroxy-3-methylbutanoate = 3-methyl-2-oxobutanoate + H2O. It catalyses the reaction (2R,3R)-2,3-dihydroxy-3-methylpentanoate = (S)-3-methyl-2-oxopentanoate + H2O. The protein operates within amino-acid biosynthesis; L-isoleucine biosynthesis; L-isoleucine from 2-oxobutanoate: step 3/4. Its pathway is amino-acid biosynthesis; L-valine biosynthesis; L-valine from pyruvate: step 3/4. In terms of biological role, functions in the biosynthesis of branched-chain amino acids. Catalyzes the dehydration of (2R,3R)-2,3-dihydroxy-3-methylpentanoate (2,3-dihydroxy-3-methylvalerate) into 2-oxo-3-methylpentanoate (2-oxo-3-methylvalerate) and of (2R)-2,3-dihydroxy-3-methylbutanoate (2,3-dihydroxyisovalerate) into 2-oxo-3-methylbutanoate (2-oxoisovalerate), the penultimate precursor to L-isoleucine and L-valine, respectively. The sequence is that of Dihydroxy-acid dehydratase from Xanthomonas campestris pv. campestris (strain B100).